The chain runs to 90 residues: RING finger protein Z (90 aa).

A lipid anchor (N-myristoyl glycine; by host) is attached at G2. An RING-type; atypical zinc finger spans residues 32 to 68; that stretch reads CKSCWQKFDSLVRCHDHYLCRHCLNLLLSVSDRCPLC. Positions 85 to 88 match the PPXY motif motif; it reads PPPY.

Belongs to the arenaviridae Z protein family. Interacts with protein NP; this interaction probably directs the encapsidated genome to budding sites. Interacts (via RING-type zinc finger) with polymerase L; this interaction inhibits viral transcription and replication, Z partially blocks the product exit tunnel for the releasing nascent RNA product. Interacts with the glycoprotein complex; this interaction plays a role in virion budding. Interacts (via RING-type zinc finger) with host EIF4E; this interaction results in conformational changes of both interacting proteins and reduces EIF4E affinity for its substrate, the 5'-m7 G cap structure. Interacts (via late-budding domain) with host TSG101; this interaction is essential for budding and release of viral particles. Interacts with host RPLP0; this interaction may serve to load ribosome-like particles inside the virion. Interacts with host PML; this interaction induces PML bodies redistribution in the cytoplasm upon viral infection. In terms of processing, myristoylation is required for the role of RING finger protein Z in assembly and budding.

The protein resides in the virion. The protein localises to the host cytoplasm. It localises to the host perinuclear region. It is found in the host cell membrane. Its function is as follows. Plays a crucial role in virion assembly and budding. Expressed late in the virus life cycle, it acts as an inhibitor of viral transcription and RNA synthesis by interacting with the viral polymerase L. Presumably recruits the NP encapsidated genome to cellular membranes at budding sites via direct interaction with NP. Plays critical roles in the final steps of viral release by interacting with host TSG101, a member of the vacuolar protein-sorting pathway and using other cellular host proteins involved in vesicle formation pathway. The budding of the virus progeny occurs after association of protein Z with the viral glycoprotein complex SSP-GP1-GP2 at the cell periphery, step that requires myristoylation of protein Z. Also selectively represses protein production by associating with host EIF4E. In cell-based minigenome assay, has an inhibitory effect on the ribonucleoprotein machinery (vRNP), which is responsible for the replication and transcription of the viral genome. In Homo sapiens (Human), this protein is RING finger protein Z.